The sequence spans 903 residues: Probable leucine--tRNA ligase, mitochondrial (903 aa).

Lys-68 is modified (N6-acetyllysine). The 'HIGH' region motif lies at 92-102 (YPSGKLHMGHV). Position 236 is an N6-acetyllysine (Lys-236). Positions 639-643 (KMSKS) match the 'KMSKS' region motif. ATP is bound at residue Lys-642. Position 711 is a phosphoserine (Ser-711).

This sequence belongs to the class-I aminoacyl-tRNA synthetase family.

The protein resides in the mitochondrion matrix. The enzyme catalyses tRNA(Leu) + L-leucine + ATP = L-leucyl-tRNA(Leu) + AMP + diphosphate. This Pongo abelii (Sumatran orangutan) protein is Probable leucine--tRNA ligase, mitochondrial (LARS2).